Reading from the N-terminus, the 217-residue chain is Adenylate kinase (217 aa).

An ATP-binding site is contributed by 10–15 (GAGKGT). An NMP region spans residues 30 to 59 (STGDMFRAAMKEETPLGLEAKSYIDKGELV). AMP is bound by residues threonine 31, arginine 36, 57 to 59 (ELV), 85 to 88 (GFPR), and glutamine 92. Residues 126–163 (GRRICSVCGTTYHLVFNPPKTPGVCDKDGGDLYQRADD) form an LID region. Arginine 127 serves as a coordination point for ATP. Zn(2+) contacts are provided by cysteine 130 and cysteine 133. 136-137 (TY) provides a ligand contact to ATP. 2 residues coordinate Zn(2+): cysteine 150 and aspartate 153. AMP is bound by residues arginine 160 and arginine 171. ATP is bound at residue glutamine 199.

Belongs to the adenylate kinase family. As to quaternary structure, monomer.

The protein localises to the cytoplasm. The catalysed reaction is AMP + ATP = 2 ADP. Its pathway is purine metabolism; AMP biosynthesis via salvage pathway; AMP from ADP: step 1/1. Its function is as follows. Catalyzes the reversible transfer of the terminal phosphate group between ATP and AMP. Plays an important role in cellular energy homeostasis and in adenine nucleotide metabolism. The polypeptide is Adenylate kinase (Bacillus velezensis (strain DSM 23117 / BGSC 10A6 / LMG 26770 / FZB42) (Bacillus amyloliquefaciens subsp. plantarum)).